Here is a 361-residue protein sequence, read N- to C-terminus: Phospho-N-acetylmuramoyl-pentapeptide-transferase (361 aa).

10 consecutive transmembrane segments (helical) span residues 25 to 45 (TGGA…WIID), 71 to 91 (TPTM…VLWA), 94 to 114 (LNPY…VGFY), 133 to 153 (WRLL…VRLG), 169 to 189 (VAIN…VGAG), 200 to 220 (GLAI…SYLA), 240 to 260 (LSVL…FNAP), 264 to 284 (IFMG…IAVA), 289 to 309 (IVLA…IVQV), and 338 to 358 (QIVI…LSTL).

The protein belongs to the glycosyltransferase 4 family. MraY subfamily. Mg(2+) serves as cofactor.

Its subcellular location is the cell inner membrane. It catalyses the reaction UDP-N-acetyl-alpha-D-muramoyl-L-alanyl-gamma-D-glutamyl-meso-2,6-diaminopimeloyl-D-alanyl-D-alanine + di-trans,octa-cis-undecaprenyl phosphate = di-trans,octa-cis-undecaprenyl diphospho-N-acetyl-alpha-D-muramoyl-L-alanyl-D-glutamyl-meso-2,6-diaminopimeloyl-D-alanyl-D-alanine + UMP. Its pathway is cell wall biogenesis; peptidoglycan biosynthesis. Catalyzes the initial step of the lipid cycle reactions in the biosynthesis of the cell wall peptidoglycan: transfers peptidoglycan precursor phospho-MurNAc-pentapeptide from UDP-MurNAc-pentapeptide onto the lipid carrier undecaprenyl phosphate, yielding undecaprenyl-pyrophosphoryl-MurNAc-pentapeptide, known as lipid I. The sequence is that of Phospho-N-acetylmuramoyl-pentapeptide-transferase from Rhodopseudomonas palustris (strain BisB18).